Reading from the N-terminus, the 681-residue chain is GAS2-like protein 1 (681 aa).

The residue at position 2 (A2) is an N-acetylalanine. One can recognise a Calponin-homology (CH) domain in the interval 27-148 (EAMKEDLAEW…CLLEVARRGA (122 aa)). 3 disordered regions span residues 168-204 (LRAA…TPSD), 278-509 (STAH…PLQL), and 536-681 (ASVT…DSWM). Residues 186-199 (ETAPAPGTPARGPR) show a composition bias toward low complexity. A Phosphothreonine modification is found at T193. The 73-residue stretch at 203–275 (SDLRNLDELV…HYLDKHDPCR (73 aa)) folds into the GAR domain. The span at 291–303 (FSPQRVSPTTSPR) shows a compositional bias: polar residues. A phosphoserine mark is found at S306 and S316. The segment covering 327–342 (STKEGPETPPRPRDQL) has biased composition (basic and acidic residues). Phosphothreonine is present on T334. Phosphoserine occurs at positions 352 and 355. Positions 354–365 (DSDSSASSAQSG) are enriched in low complexity. Basic and acidic residues predominate over residues 370–381 (RSDDTGTGPRRE). At T391 the chain carries Phosphothreonine. S394 bears the Phosphoserine mark. Residues 404 to 413 (QSRDRLDRGR) are compositionally biased toward basic and acidic residues. S436, S438, S479, and S486 each carry phosphoserine. The segment covering 437-454 (QSREEQAVLLVRRDRDGQ) has biased composition (basic and acidic residues). Positions 475–493 (PRARSPAAPRLSRVSSPSP) are enriched in low complexity. At R487 the chain carries Omega-N-methylarginine. A phosphoserine mark is found at S490 and S492. At T498 the chain carries Phosphothreonine. Position 504 is an omega-N-methylarginine (R504). Positions 542-556 (GPVPDPARAPDPPAP) are enriched in pro residues. Positions 557-571 (DSAYCSSSSSSSSLS) are enriched in low complexity. An Omega-N-methylarginine modification is found at R633. Basic and acidic residues predominate over residues 634-644 (GRMDTQPDRKP). S657 is modified (phosphoserine).

The protein belongs to the GAS2 family. In terms of assembly, interacts with MAPRE1.

The protein localises to the cytoplasm. It localises to the cytoskeleton. The protein resides in the stress fiber. In terms of biological role, involved in the cross-linking of microtubules and microfilaments. Regulates microtubule dynamics and stability by interacting with microtubule plus-end tracking proteins, such as MAPRE1, to regulate microtubule growth along actin stress fibers. This Homo sapiens (Human) protein is GAS2-like protein 1 (GAS2L1).